Consider the following 81-residue polypeptide: Serine/arginine-rich splicing factor 6 (81 aa).

The span at 1 to 48 shows a compositional bias: basic residues; the sequence is RSRSRSRRSSRSRSRSISKSRSRSRSRSKGRSRSRSKGRKSRSKSKSK. The segment at 1 to 81 is disordered; the sequence is RSRSRSRRSS…SRSRSRSRSP (81 aa). Basic and acidic residues predominate over residues 62–71; that stretch reads RSKDEYEKSR. Over residues 72 to 81 the composition is skewed to basic residues; the sequence is SRSRSRSRSP.

This sequence belongs to the splicing factor SR family. Binds SREK1/SFRS12. Interacts with DYRK1A. Post-translationally, extensively phosphorylated on serine residues in the RS domain. Phosphorylated by DYRK1A, probably in the RS domain. Phosphorylation by DYRK1A modulates alternative splice site selection and inhibits the expression of MAPT/Tau exon 10.

The protein resides in the nucleus. It is found in the nucleus speckle. Plays a role in constitutive splicing and modulates the selection of alternative splice sites. Plays a role in the alternative splicing of MAPT/Tau exon 10. Binds to alternative exons of TNC pre-mRNA and promotes the expression of alternatively spliced TNC. Plays a role in wound healing and in the regulation of keratinocyte differentiation and proliferation via its role in alternative splicing. The sequence is that of Serine/arginine-rich splicing factor 6 (SRSF6) from Oryctolagus cuniculus (Rabbit).